A 536-amino-acid chain; its full sequence is Keratin, type II cytoskeletal 4 (536 aa).

A head region spans residues 1–145 (MISRQSSVRG…DPEIQKIRTA (145 aa)). R13 bears the Omega-N-methylarginine mark. The interval 146–181 (EREQIKTLNNKFASFIDKVRFLEQQNKVLETKWNLL) is coil 1A. An IF rod domain is found at 146-457 (EREQIKTLNN…KLLEGEECRM (312 aa)). The linker 1 stretch occupies residues 182 to 200 (QQQTTTTSPRNLDPFFETY). The tract at residues 201-293 (INALRKNLDT…LYEAELSQMQ (93 aa)) is coil 1B. A linker 12 region spans residues 294–316 (THVSDTSVVLSMDNNRNLDLDGI). The coil 2 stretch occupies residues 317-454 (IAEVRAQYEE…TYRKLLEGEE (138 aa)). The interval 455–524 (CRMSGECKSA…TSSATITKRS (70 aa)) is tail. Residues 515 to 536 (TSSATITKRSPRTRQDPDGLQP) form a disordered region. Residues 527–536 (TRQDPDGLQP) are compositionally biased toward basic and acidic residues.

Belongs to the intermediate filament family. In terms of assembly, heterotetramer of two type I and two type II keratins. keratin-4 is generally associated with keratin-13.

The protein is Keratin, type II cytoskeletal 4 of Rattus norvegicus (Rat).